The primary structure comprises 57 residues: MAVPKRRMSRSNTRSRRSQWKAQAPDLVGVTVGGATHRVPRRLVKAVKLGLVDPAGK.

Residues 1 to 19 (MAVPKRRMSRSNTRSRRSQ) show a composition bias toward basic residues. Residues 1 to 22 (MAVPKRRMSRSNTRSRRSQWKA) are disordered.

It belongs to the bacterial ribosomal protein bL32 family.

In Rhodococcus jostii (strain RHA1), this protein is Large ribosomal subunit protein bL32.